A 276-amino-acid chain; its full sequence is Pantothenate synthetase (276 aa).

ATP is bound at residue 27 to 34; sequence MGNLHDGH. The active-site Proton donor is His34. Gln58 is a (R)-pantoate binding site. Gln58 contributes to the beta-alanine binding site. 145–148 is an ATP binding site; that stretch reads GKKD. Gln151 lines the (R)-pantoate pocket. Residues Ile174 and 182 to 185 each bind ATP; that span reads LSSR.

Belongs to the pantothenate synthetase family. As to quaternary structure, homodimer.

The protein resides in the cytoplasm. The enzyme catalyses (R)-pantoate + beta-alanine + ATP = (R)-pantothenate + AMP + diphosphate + H(+). It functions in the pathway cofactor biosynthesis; (R)-pantothenate biosynthesis; (R)-pantothenate from (R)-pantoate and beta-alanine: step 1/1. In terms of biological role, catalyzes the condensation of pantoate with beta-alanine in an ATP-dependent reaction via a pantoyl-adenylate intermediate. The chain is Pantothenate synthetase from Aromatoleum aromaticum (strain DSM 19018 / LMG 30748 / EbN1) (Azoarcus sp. (strain EbN1)).